Reading from the N-terminus, the 237-residue chain is 2-C-methyl-D-erythritol 4-phosphate cytidylyltransferase (237 aa).

The protein belongs to the IspD/TarI cytidylyltransferase family. IspD subfamily.

It catalyses the reaction 2-C-methyl-D-erythritol 4-phosphate + CTP + H(+) = 4-CDP-2-C-methyl-D-erythritol + diphosphate. It functions in the pathway isoprenoid biosynthesis; isopentenyl diphosphate biosynthesis via DXP pathway; isopentenyl diphosphate from 1-deoxy-D-xylulose 5-phosphate: step 2/6. In terms of biological role, catalyzes the formation of 4-diphosphocytidyl-2-C-methyl-D-erythritol from CTP and 2-C-methyl-D-erythritol 4-phosphate (MEP). This chain is 2-C-methyl-D-erythritol 4-phosphate cytidylyltransferase, found in Acidithiobacillus ferrooxidans (strain ATCC 23270 / DSM 14882 / CIP 104768 / NCIMB 8455) (Ferrobacillus ferrooxidans (strain ATCC 23270)).